Here is a 506-residue protein sequence, read N- to C-terminus: Glutamate--tRNA ligase (506 aa).

A 'HIGH' region motif is present at residues 12–22 (PSPTGDPHVGT). The 'KMSKS' region signature appears at 253 to 257 (KLSKR). Lys256 provides a ligand contact to ATP.

Belongs to the class-I aminoacyl-tRNA synthetase family. Glutamate--tRNA ligase type 1 subfamily. In terms of assembly, monomer.

It localises to the cytoplasm. The enzyme catalyses tRNA(Glu) + L-glutamate + ATP = L-glutamyl-tRNA(Glu) + AMP + diphosphate. Its function is as follows. Catalyzes the attachment of glutamate to tRNA(Glu) in a two-step reaction: glutamate is first activated by ATP to form Glu-AMP and then transferred to the acceptor end of tRNA(Glu). The sequence is that of Glutamate--tRNA ligase from Chlamydia trachomatis serovar A (strain ATCC VR-571B / DSM 19440 / HAR-13).